A 256-amino-acid chain; its full sequence is F-actin-capping protein subunit beta (256 aa).

N-acetylmethionine is present on Met-1.

It belongs to the F-actin-capping protein beta subunit family. As to quaternary structure, component of the F-actin capping complex, composed of a heterodimer of an alpha and a beta subunit.

It localises to the cytoplasm. Its subcellular location is the cytoskeleton. In terms of biological role, F-actin-capping proteins bind in a Ca(2+)-independent manner to the fast growing ends of actin filaments (barbed end) thereby blocking the exchange of subunits at these ends. Unlike other capping proteins (such as gelsolin and severin), these proteins do not sever actin filaments. This Arabidopsis thaliana (Mouse-ear cress) protein is F-actin-capping protein subunit beta.